The sequence spans 194 residues: Ribonuclease HII (194 aa).

The 191-residue stretch at 3–193 (ILTAGVDEAG…VRNLLAQQAL (191 aa)) folds into the RNase H type-2 domain. The a divalent metal cation site is built by Asp-9, Glu-10, and Asp-101.

This sequence belongs to the RNase HII family. Mn(2+) serves as cofactor. It depends on Mg(2+) as a cofactor.

The protein resides in the cytoplasm. The enzyme catalyses Endonucleolytic cleavage to 5'-phosphomonoester.. Functionally, endonuclease that specifically degrades the RNA of RNA-DNA hybrids. This chain is Ribonuclease HII (rnhB), found in Neisseria meningitidis serogroup A / serotype 4A (strain DSM 15465 / Z2491).